Consider the following 144-residue polypeptide: Mediator of RNA polymerase II transcription subunit 21 (144 aa).

This sequence belongs to the Mediator complex subunit 21 family. As to quaternary structure, component of the Mediator complex, which is composed of MED1, MED4, MED6, MED7, MED8, MED9, MED10, MED11, MED12, MED13, MED13L, MED14, MED15, MED16, MED17, MED18, MED19, MED20, MED21, MED22, MED23, MED24, MED25, MED26, MED27, MED29, MED30, MED31, CCNC, CDK8 and CDC2L6/CDK11. The MED12, MED13, CCNC and CDK8 subunits form a distinct module termed the CDK8 module. Mediator containing the CDK8 module is less active than Mediator lacking this module in supporting transcriptional activation. Individual preparations of the Mediator complex lacking one or more distinct subunits have been variously termed ARC, CRSP, DRIP, PC2, SMCC and TRAP. Interacts with PPARG. Interacts with THRA in a ligand-dependent fashion.

It is found in the nucleus. Functionally, component of the Mediator complex, a coactivator involved in the regulated transcription of nearly all RNA polymerase II-dependent genes. Mediator functions as a bridge to convey information from gene-specific regulatory proteins to the basal RNA polymerase II transcription machinery. Mediator is recruited to promoters by direct interactions with regulatory proteins and serves as a scaffold for the assembly of a functional preinitiation complex with RNA polymerase II and the general transcription factors. In Pongo abelii (Sumatran orangutan), this protein is Mediator of RNA polymerase II transcription subunit 21 (MED21).